The following is a 421-amino-acid chain: Imidazolonepropionase (421 aa).

2 residues coordinate Fe(3+): His81 and His83. His81 and His83 together coordinate Zn(2+). 4-imidazolone-5-propanoate-binding residues include Arg90, Tyr153, and His186. Residue Tyr153 coordinates N-formimidoyl-L-glutamate. His251 is a Fe(3+) binding site. Position 251 (His251) interacts with Zn(2+). Position 254 (Glu254) interacts with 4-imidazolone-5-propanoate. Asp326 serves as a coordination point for Fe(3+). Asp326 provides a ligand contact to Zn(2+). N-formimidoyl-L-glutamate is bound by residues Asn328 and Gly330. 4-imidazolone-5-propanoate is bound at residue Ser331.

The protein belongs to the metallo-dependent hydrolases superfamily. HutI family. Zn(2+) is required as a cofactor. Requires Fe(3+) as cofactor.

Its subcellular location is the cytoplasm. The catalysed reaction is 4-imidazolone-5-propanoate + H2O = N-formimidoyl-L-glutamate. Its pathway is amino-acid degradation; L-histidine degradation into L-glutamate; N-formimidoyl-L-glutamate from L-histidine: step 3/3. In terms of biological role, catalyzes the hydrolytic cleavage of the carbon-nitrogen bond in imidazolone-5-propanoate to yield N-formimidoyl-L-glutamate. It is the third step in the universal histidine degradation pathway. In Streptococcus pyogenes serotype M6 (strain ATCC BAA-946 / MGAS10394), this protein is Imidazolonepropionase.